Consider the following 375-residue polypeptide: Chaperone protein DnaJ (375 aa).

One can recognise a J domain in the interval 5–70 (DFYETLGVAK…QKRAAYDRYG (66 aa)). The CR-type zinc finger occupies 136 to 214 (GKTAQIRVPT…CHGQGRVTEE (79 aa)). Zn(2+) is bound by residues Cys149, Cys152, Cys166, Cys169, Cys188, Cys191, Cys202, and Cys205. CXXCXGXG motif repeat units lie at residues 149 to 156 (CDVCSGSG), 166 to 173 (CGTCQGTG), 188 to 195 (CPTCHGRG), and 202 to 209 (CPKCHGQG).

Belongs to the DnaJ family. Homodimer. Requires Zn(2+) as cofactor.

Its subcellular location is the cytoplasm. Functionally, participates actively in the response to hyperosmotic and heat shock by preventing the aggregation of stress-denatured proteins and by disaggregating proteins, also in an autonomous, DnaK-independent fashion. Unfolded proteins bind initially to DnaJ; upon interaction with the DnaJ-bound protein, DnaK hydrolyzes its bound ATP, resulting in the formation of a stable complex. GrpE releases ADP from DnaK; ATP binding to DnaK triggers the release of the substrate protein, thus completing the reaction cycle. Several rounds of ATP-dependent interactions between DnaJ, DnaK and GrpE are required for fully efficient folding. Also involved, together with DnaK and GrpE, in the DNA replication of plasmids through activation of initiation proteins. This Rhizobium johnstonii (strain DSM 114642 / LMG 32736 / 3841) (Rhizobium leguminosarum bv. viciae) protein is Chaperone protein DnaJ.